Here is a 387-residue protein sequence, read N- to C-terminus: Patatin-08 (387 aa).

An N-terminal signal peptide occupies residues 1 to 23 (MATTKSFLILIVMILATTSSTFA). Residues 32–230 (LSIDGGGIKG…TVADPALLSI (199 aa)) enclose the PNPLA domain. A GXGXXG motif is present at residues 36-41 (GGGIKG). Positions 75–79 (GTSTG) match the GXSXG motif. Ser-77 functions as the Nucleophile in the catalytic mechanism. Asn-115 carries N-linked (GlcNAc...) asparagine glycosylation. The active-site Proton acceptor is Asp-216. A DGA/G motif is present at residues 216 to 218 (DGA). The stretch at 361 to 385 (ETYEEALKRFAKLLSDRKKLRANKA) forms a coiled coil.

It belongs to the patatin family. As to expression, tuber.

It localises to the vacuole. Probable lipolytic acyl hydrolase (LAH), an activity which is thought to be involved in the response of tubers to pathogens. The protein is Patatin-08 of Solanum tuberosum (Potato).